The chain runs to 373 residues: UDP-glucose 4-epimerase 3 (373 aa).

27-58 (SVLVTGGAGYIGTHTVLRLLEKGFAVTVVDNF) provides a ligand contact to NAD(+). S153 contacts substrate. Y177 (proton acceptor) is an active-site residue.

The protein belongs to the NAD(P)-dependent epimerase/dehydratase family. NAD(+) is required as a cofactor.

It carries out the reaction UDP-alpha-D-glucose = UDP-alpha-D-galactose. Its pathway is carbohydrate metabolism; galactose metabolism. Its function is as follows. Catalyzes the interconversion between UDP-glucose and UDP-galactose. The protein is UDP-glucose 4-epimerase 3 (UGE-3) of Oryza sativa subsp. japonica (Rice).